The chain runs to 246 residues: Probable transcriptional regulatory protein YebC (246 aa).

Residues M1–K20 are disordered.

It belongs to the TACO1 family.

The protein resides in the cytoplasm. In Salmonella choleraesuis (strain SC-B67), this protein is Probable transcriptional regulatory protein YebC.